Consider the following 164-residue polypeptide: E3 ubiquitin ligase complex SCF subunit sconC (164 aa).

The segment at 106–164 (ILAANYLDIKALLDVGCKTVANMIKGKSPEEIRKTFNIQNDFTPEEEDQIRRENEWAEE) is interaction with the F-box domain of F-box proteins.

Belongs to the SKP1 family. Component of the SCF (SKP1-CUL1-F-box protein) E3 ubiquitin ligase complexes.

It participates in protein modification; protein ubiquitination. Essential component of the SCF (SKP1-CUL1-F-box protein) E3 ubiquitin ligase complexes, which mediate the ubiquitination and subsequent proteasomal degradation of target proteins. Controls sulfur metabolite repression, probably by mediating the inactivation or degradation of the metR transcription factor. In Arthroderma benhamiae (strain ATCC MYA-4681 / CBS 112371) (Trichophyton mentagrophytes), this protein is E3 ubiquitin ligase complex SCF subunit sconC (sconC).